A 277-amino-acid chain; its full sequence is Phosphatidylglycerol--prolipoprotein diacylglyceryl transferase (277 aa).

3 consecutive transmembrane segments (helical) span residues 17 to 37 (LAIHWYGLSYLAAFGLFMLLG), 63 to 83 (ILFLGVAGVVLGGRLGYCLFY), and 101 to 121 (GGMAFHGGLLGVIVAMLWFAH). Arg146 contacts a 1,2-diacyl-sn-glycero-3-phospho-(1'-sn-glycerol). A run of 3 helical transmembrane segments spans residues 182–202 (SQVYQFLLEGLLLFVLLWLYA), 209–229 (GQVAAAFLVGYGVLRFIAEQF), and 234–254 (AFLGILALGMSMGQWLCLPMI).

Belongs to the Lgt family.

The protein localises to the cell inner membrane. It carries out the reaction L-cysteinyl-[prolipoprotein] + a 1,2-diacyl-sn-glycero-3-phospho-(1'-sn-glycerol) = an S-1,2-diacyl-sn-glyceryl-L-cysteinyl-[prolipoprotein] + sn-glycerol 1-phosphate + H(+). The protein operates within protein modification; lipoprotein biosynthesis (diacylglyceryl transfer). Functionally, catalyzes the transfer of the diacylglyceryl group from phosphatidylglycerol to the sulfhydryl group of the N-terminal cysteine of a prolipoprotein, the first step in the formation of mature lipoproteins. The protein is Phosphatidylglycerol--prolipoprotein diacylglyceryl transferase of Verminephrobacter eiseniae (strain EF01-2).